We begin with the raw amino-acid sequence, 1364 residues long: ABC-type transporter cns4 (1364 aa).

Positions 42–290 constitute an ABC transporter 1 domain; sequence SRVKESRAKP…MEEMGFLYTD (249 aa). Asn-152 and Asn-214 each carry an N-linked (GlcNAc...) asparagine glycan. The next 5 helical transmembrane spans lie at 435–455, 483–503, 508–528, 540–560, and 567–587; these read LFFA…GSFA, IPLI…MTGL, EAFL…TALF, AAIK…GFLI, and PWLG…AVLS. An N-linked (GlcNAc...) asparagine glycan is attached at Asn-610. Residues 650 to 670 traverse the membrane as a helical segment; the sequence is FAIVWVWWALFVILTVYFTSN. N-linked (GlcNAc...) asparagine glycans are attached at residues Asn-689, Asn-711, and Asn-739. The disordered stretch occupies residues 697-732; the sequence is DEEVGSGPDSHDSRNRSGISPIGDKQETSTDGPSKI. An ABC transporter 2 domain is found at 737–985; it reads IRNTSVFTWK…TVNEYFGRNG (249 aa). 779–786 provides a ligand contact to ATP; that stretch reads GSSGAGKT. 6 helical membrane passes run 1076–1094, 1105–1125, 1146–1166, 1185–1205, 1211–1231, and 1245–1265; these read LMLH…WKIG, FTIF…QPLF, AFAT…AVVY, AVFF…QAIA, AIFA…FCGV, and WLYY…FTTF.

The protein belongs to the ABC transporter superfamily. ABCG family. PDR (TC 3.A.1.205) subfamily.

The protein localises to the cell membrane. In terms of biological role, ABC-type transporter; part of the gene cluster that mediates the biosynthesis of cordycepin (COR) and pentostatin (PTN), two adenosine analogs with related bioactivity profiles as both mimic adenosine and can inhibit some of the processes that are adenosine dependent. Mediates the pumping of pentostatin but not of cordycepin out of fungal cells. Decreasing intracellular pentostatin releases adenosine deaminase (ADA) inhibition, allowing ADA to deaminate cordycepin into non-toxic 3'-d. The chain is ABC-type transporter cns4 from Cordyceps militaris (strain CM01) (Caterpillar fungus).